We begin with the raw amino-acid sequence, 218 residues long: Small ribosomal subunit protein uS3c (218 aa).

In terms of domain architecture, KH type-2 spans 47–118; it reads VQNNIRISSG…KLNIAITRIS (72 aa).

This sequence belongs to the universal ribosomal protein uS3 family. As to quaternary structure, part of the 30S ribosomal subunit.

Its subcellular location is the plastid. The protein localises to the chloroplast. The sequence is that of Small ribosomal subunit protein uS3c (rps3) from Draba nemorosa (Woodland whitlowgrass).